A 314-amino-acid chain; its full sequence is Taste receptor type 2 member 42 (314 aa).

Residues 1-7 (MPTELDK) lie on the Extracellular side of the membrane. The helical transmembrane segment at 8–28 (IFLILAIVEFIIGLLGNVFIG) threads the bilayer. The Cytoplasmic portion of the chain corresponds to 29–50 (LVNCSEGIKNQKVFSADFILTC). Residues 51–71 (LAISTIGQLLVILFDSFLVGL) traverse the membrane as a helical segment. Residues 72 to 101 (ASHLYTTYRLGKLVILLWHMTNHLTTWLAT) are Extracellular-facing. Residues 102 to 122 (CLSIFYFFKIAHFPHSLFLWL) traverse the membrane as a helical segment. The Cytoplasmic portion of the chain corresponds to 123 to 127 (RWRMN). A helical transmembrane segment spans residues 128 to 148 (GMIVMLRTLSLFLLIFDSLVL). The Extracellular segment spans residues 149–187 (KLFIDISLNIIDKSNLTLYFDESKTLYDKLSILKTLLSL). Asn163 carries N-linked (GlcNAc...) asparagine glycosylation. The chain crosses the membrane as a helical span at residues 188 to 208 (TSFIPFSLSLTSLLFLFLSLV). Topologically, residues 209 to 238 (RHTRNLKLSSLGSRDSSTEAHRRAMKMVMS) are cytoplasmic. The helical transmembrane segment at 239 to 259 (FLFLFIVHFFSLQVANWIFFM) threads the bilayer. At 260 to 265 (SWNNKY) the chain is on the extracellular side. The chain crosses the membrane as a helical span at residues 266–286 (IKFVMLALNAFPSCHSFILIL). Residues 287 to 314 (GNSKLRQTAVRLLSHLRNYTKTSNPLPL) lie on the Cytoplasmic side of the membrane.

Belongs to the G-protein coupled receptor T2R family.

The protein resides in the membrane. Functionally, receptor that may play a role in the perception of bitterness and is gustducin-linked. May play a role in sensing the chemical composition of the gastrointestinal content. The activity of this receptor may stimulate alpha gustducin, mediate PLC-beta-2 activation and lead to the gating of TRPM5. The protein is Taste receptor type 2 member 42 (TAS2R42) of Pongo pygmaeus (Bornean orangutan).